The following is a 263-amino-acid chain: Phosphate import ATP-binding protein PstB (263 aa).

The 242-residue stretch at 17–258 (ISVKNLDFFY…PKRKETEDYI (242 aa)) folds into the ABC transporter domain. 49-56 (GPSGCGKS) contributes to the ATP binding site.

Belongs to the ABC transporter superfamily. Phosphate importer (TC 3.A.1.7) family. In terms of assembly, the complex is composed of two ATP-binding proteins (PstB), two transmembrane proteins (PstC and PstA) and a solute-binding protein (PstS).

Its subcellular location is the cell inner membrane. The enzyme catalyses phosphate(out) + ATP + H2O = ADP + 2 phosphate(in) + H(+). Functionally, part of the ABC transporter complex PstSACB involved in phosphate import. Responsible for energy coupling to the transport system. This chain is Phosphate import ATP-binding protein PstB, found in Polaromonas sp. (strain JS666 / ATCC BAA-500).